The sequence spans 419 residues: MVARFENQAPENLHGKYQAMVVCCILGIGSLVSWNSLLSVGDYYYQVFPDYHPSRVLTFVYQPFSIGTIVIFAYNESKINTRKRNLIGYIVFTTSIFLLIILDLATKGHGGIGPYIVLCAIVGSFGFADASVRGGMIGDLSLMCPELIQSFVAGLAVAGALTSAFRLITKAAFEKTHDGLRKGAMIFLAISTLVEFLCVLLYAYVFPKLPIVKYYRSKAASEGSKTVYADLAAAGIQNQSVLTADDVSKDKRLNNKELLLENVDYVVNLFLIYVLTLSILPGFLYENTGQHGLGSWYALVLIAMYNWWDLVGRYIPMVKWLNVENRKGLTVAVLTRFLLVPAFYFTAKYGDQGWMILLVSILGLTNGHLTVCILAKAPRGYTGPEKNALGNLLVLFILWGAFVGCALGWLWLIGKKNAF.

11 helical membrane-spanning segments follow: residues 20 to 40, 56 to 76, 86 to 106, 108 to 128, 142 to 162, 186 to 206, 265 to 285, 292 to 312, 327 to 347, 354 to 374, and 393 to 413; these read MVVC…LLSV, VLTF…AYNE, LIGY…DLAT, GHGG…FGFA, LMCP…GALT, IFLA…AYVF, YVVN…GFLY, GLGS…DLVG, KGLT…YFTA, WMIL…VCIL, and LVLF…LWLI.

It belongs to the SLC29A/ENT transporter (TC 2.A.57) family.

The protein resides in the cell membrane. Its function is as follows. May be involved in nucleoside transport. The sequence is that of Equilibrative nucleotide transporter 5 (ENT5) from Arabidopsis thaliana (Mouse-ear cress).